Consider the following 104-residue polypeptide: Glutaredoxin (104 aa).

The 101-residue stretch at 3 to 103 (MIKAQELVSS…PLLTEAGAVK (101 aa)) folds into the Glutaredoxin domain. A disulfide bridge links Cys23 with Cys26.

It belongs to the glutaredoxin family. CPYC subfamily.

The protein resides in the cytoplasm. Has a glutathione-disulfide oxidoreductase activity in the presence of NADPH and glutathione reductase. Reduces low molecular weight disulfides and proteins. This Vernicia fordii (Tung) protein is Glutaredoxin.